The sequence spans 117 residues: Large ribosomal subunit protein bL17 (117 aa).

It belongs to the bacterial ribosomal protein bL17 family. Part of the 50S ribosomal subunit. Contacts protein L32.

This Dehalococcoides mccartyi (strain ATCC BAA-2100 / JCM 16839 / KCTC 5957 / BAV1) protein is Large ribosomal subunit protein bL17.